The following is a 354-amino-acid chain: Polyribonucleotide 5'-hydroxyl-kinase PF0112 (354 aa).

Position 36–43 (36–43 (GDVDTGKT)) interacts with ATP.

Requires a divalent metal cation as cofactor.

The catalysed reaction is a 5'-end dephospho-2'-deoxyribonucleoside-DNA + ATP = a 5'-end 5'-phospho-2'-deoxyribonucleoside-DNA + ADP + H(+). The enzyme catalyses a 5'-end dephospho-ribonucleoside-RNA + ATP = a 5'-end 5'-phospho-ribonucleoside-RNA + ADP + H(+). Functionally, polynucleotide kinase that can phosphorylate the 5'-hydroxyl groups of both single-stranded RNA (ssRNA) and single-stranded DNA (ssDNA). Exhibits a strong preference for ssRNA. This Pyrococcus furiosus (strain ATCC 43587 / DSM 3638 / JCM 8422 / Vc1) protein is Polyribonucleotide 5'-hydroxyl-kinase PF0112.